The primary structure comprises 339 residues: Glyceraldehyde-3-phosphate dehydrogenase (339 aa).

NAD(+)-binding positions include 13–14, Asp35, and Lys84; that span reads RI. D-glyceraldehyde 3-phosphate is bound by residues 156-158, Thr187, 216-217, and Arg239; these read SCT and TG. Cys157 acts as the Nucleophile in catalysis. Asn321 provides a ligand contact to NAD(+).

This sequence belongs to the glyceraldehyde-3-phosphate dehydrogenase family. Homotetramer.

It localises to the cytoplasm. It carries out the reaction D-glyceraldehyde 3-phosphate + phosphate + NAD(+) = (2R)-3-phospho-glyceroyl phosphate + NADH + H(+). It functions in the pathway carbohydrate degradation; glycolysis; pyruvate from D-glyceraldehyde 3-phosphate: step 1/5. The polypeptide is Glyceraldehyde-3-phosphate dehydrogenase (G3PD) (Brugia malayi (Filarial nematode worm)).